Here is a 347-residue protein sequence, read N- to C-terminus: High mobility group protein 20A (347 aa).

Polar residues-rich tracts occupy residues 1–10 (MENLMTSSTL) and 40–49 (SGATSSTNNP). Disordered regions lie at residues 1-113 (MENL…YVRF) and 179-211 (FSRK…TEVK). Low complexity predominate over residues 55–66 (LSQGQLLQSESS). Over residues 72-82 (NEQRHEDEQRS) the composition is skewed to basic and acidic residues. The span at 83–96 (KRGGWSKGRKRKKP) shows a compositional bias: basic residues. Positions 103-171 (PKSPLTGYVR…RYMKELEQYQ (69 aa)) form a DNA-binding region, HMG box. At Ser-105 the chain carries Phosphoserine. Basic and acidic residues predominate over residues 182 to 211 (KTQDRQKGKSHRQDAARQATHDHEKETEVK). Residues 229-273 (SKAREAELRQLRKSNMEFEERNAALQKHVESMRTAVEKLEVDVIQ) are a coiled coil.

As to quaternary structure, interacts with DTNB. In terms of tissue distribution, ubiquitous.

The protein localises to the nucleus. In terms of biological role, plays a role in neuronal differentiation as chromatin-associated protein. Acts as inhibitor of HMG20B. Overcomes the repressive effects of the neuronal silencer REST and induces the activation of neuronal-specific genes. Involved in the recruitment of the histone methyltransferase KMT2A/MLL1 and consequent increased methylation of histone H3 lysine 4. The protein is High mobility group protein 20A (HMG20A) of Homo sapiens (Human).